The following is a 136-amino-acid chain: Large ribosomal subunit protein uL16 (136 aa).

Belongs to the universal ribosomal protein uL16 family. Part of the 50S ribosomal subunit.

Binds 23S rRNA and is also seen to make contacts with the A and possibly P site tRNAs. This chain is Large ribosomal subunit protein uL16, found in Vibrio campbellii (strain ATCC BAA-1116).